The sequence spans 237 residues: Lectin (237 aa).

Residue N69 is glycosylated (N-linked (GlcNAc...) asparagine). Blocked amino end (Ile) is present on I106. Residues E115 and D117 each coordinate Mn(2+). D117, Y120, N122, and D127 together coordinate Ca(2+). Mn(2+)-binding residues include D127 and H132.

This sequence belongs to the leguminous lectin family. As to quaternary structure, tetramer of two alpha and two beta chains. Post-translationally, the N-terminus of alpha chain is blocked. The alpha and beta chains are produced by proteolytic processing, with probably the loss of intervening amino acid(s).

D-mannose/D-glucose-binding lectin. Requires Ca(2+) and Mn(2+) ions for full activity. This Lablab purpureus (Hyacinth bean) protein is Lectin.